The chain runs to 147 residues: Mid1-interacting protein 1-B (147 aa).

It belongs to the SPOT14 family.

It localises to the nucleus. Its subcellular location is the cytoplasm. It is found in the cytoskeleton. Functionally, involved in stabilization of microtubules. May play a role in the regulation of lipogenesis. The chain is Mid1-interacting protein 1-B from Danio rerio (Zebrafish).